Reading from the N-terminus, the 259-residue chain is Type III pantothenate kinase (259 aa).

9–16 (DAGNSRIK) provides a ligand contact to ATP. Substrate is bound by residues Tyr93 and 100–103 (GSDR). Asp102 serves as the catalytic Proton acceptor. Residue Thr126 coordinates ATP. Thr190 provides a ligand contact to substrate.

The protein belongs to the type III pantothenate kinase family. Homodimer. NH4(+) is required as a cofactor. The cofactor is K(+).

The protein localises to the cytoplasm. It carries out the reaction (R)-pantothenate + ATP = (R)-4'-phosphopantothenate + ADP + H(+). It functions in the pathway cofactor biosynthesis; coenzyme A biosynthesis; CoA from (R)-pantothenate: step 1/5. Its function is as follows. Catalyzes the phosphorylation of pantothenate (Pan), the first step in CoA biosynthesis. The chain is Type III pantothenate kinase from Burkholderia pseudomallei (strain K96243).